Here is a 583-residue protein sequence, read N- to C-terminus: Isocitrate dehydrogenase kinase/phosphatase (583 aa).

ATP contacts are provided by residues 315–321 (APGIRGM) and lysine 336. Aspartate 371 is an active-site residue.

The protein belongs to the AceK family.

Its subcellular location is the cytoplasm. It carries out the reaction L-seryl-[isocitrate dehydrogenase] + ATP = O-phospho-L-seryl-[isocitrate dehydrogenase] + ADP + H(+). Bifunctional enzyme which can phosphorylate or dephosphorylate isocitrate dehydrogenase (IDH) on a specific serine residue. This is a regulatory mechanism which enables bacteria to bypass the Krebs cycle via the glyoxylate shunt in response to the source of carbon. When bacteria are grown on glucose, IDH is fully active and unphosphorylated, but when grown on acetate or ethanol, the activity of IDH declines drastically concomitant with its phosphorylation. This Salmonella dublin (strain CT_02021853) protein is Isocitrate dehydrogenase kinase/phosphatase.